The sequence spans 342 residues: Protein-ribulosamine 3-kinase, chloroplastic (342 aa).

The transit peptide at Met1–Met46 directs the protein to the chloroplast. Glu141–Ile143 lines the ATP pocket. The active-site Proton acceptor is the Asp246.

This sequence belongs to the fructosamine kinase family.

The protein resides in the plastid. It is found in the chloroplast. The catalysed reaction is N(6)-D-ribulosyl-L-lysyl-[protein] + ATP = N(6)-(3-O-phospho-D-ribulosyl)-L-lysyl-[protein] + ADP + H(+). It catalyses the reaction N(6)-(D-erythrulosyl)-L-lysyl-[protein] + ATP = N(6)-(3-O-phospho-D-erythrulosyl)-L-lysyl-[protein] + ADP + H(+). In terms of biological role, initiates a process leading to the deglycation of proteins. Phosphorylates low-molecular-mass and protein-bound erythrulosamines and ribulosamines, but not fructosamines or psicosamines, on the third carbon of the sugar moiety. Protein-bound erythrulosamine 3-phosphates and ribulosamine 3-phosphates are unstable and decompose under physiological conditions. The chain is Protein-ribulosamine 3-kinase, chloroplastic from Oryza sativa subsp. indica (Rice).